Here is a 1047-residue protein sequence, read N- to C-terminus: Rab11 family-interacting protein 3 (1047 aa).

Disordered stretches follow at residues 1–107 (MELC…WPQE), 311–335 (SHSCPQEADTGCLSAKEPEEPDVSH), and 475–496 (PGPPSDPGPALSLPSEPGTAQE). Basic and acidic residues predominate over residues 64–73 (EPHAPSRWAK). EF-hand domains follow at residues 496 to 531 (EEGARLRAVFDALDRDGDGFVRIEDFIQFATVYGAE) and 528 to 563 (YGAEQVKDLTQYLDPSGLGVISFEDFYQGIVAIRNG). Ca(2+) is bound by residues Asp509, Asp511, Asp513, Asp520, Asp541, Ser543, and Asp552. Ser641, Ser765, and Ser829 each carry phosphoserine. Positions 750-985 (EEDIADKVIF…NGQIITLSIQ (236 aa)) form a coiled coil. Residues 775–879 (GEQHGRLRQE…MLDEIEELTQ (105 aa)) are ARF-binding domain (ABD). A disordered region spans residues 882–906 (SEEQENKRKMGDRLSHERHQFQRDK). A phosphoserine mark is found at Ser938 and Ser939. An FIP-RBD domain is found at 985–1047 (QGAKSLFSTS…ETNPSILEVK (63 aa)).

As to quaternary structure, homodimer. Interacts with RAB11A; the interaction is direct and is required for the recruitment to endosomes. Interacts with RAB11B. Forms a ternary complex with RAB11A and dynein intermediate chain DYNC1LI1; RAB11FIP3 links RAB11A to dynein and the interaction regulates endocytic trafficking. Interacts with dynein intermediate chain and dynactin (DCTN1); the interaction activates dynein processivity. Interacts with ARF6 and EXOC7; the interaction serves for recruitment and tethering of recycling endosomes-derived vesicles to the cleavage furrow/midbody. Interacts with RACGAP1/MgcRacGAP; the interaction occurs at late telophase and is required for recruitment and tethering of recycling endosomes-derived vesicles to the cleavage furrow/midbody. Forms a complex with RAB11A and Rabin8/RAB3IP, probably a heterohexamer with two of each protein subunit, where RAB3IP and RAB11FIP3 simultaneously bind to RAB11A; the complex promotes preciliary trafficking. Forms a complex containing RAB11A, ASAP1, RAB3IP, RAP11FIP3 and ARF4; the complex promotes preciliary trafficking; the complex binds to RHO in photoreceptor cells and promotes RHO ciliary transport. Interacts with RAB11FIP4. Interacts with RAB25.

Its subcellular location is the recycling endosome membrane. The protein localises to the cytoplasm. It localises to the cytoskeleton. It is found in the microtubule organizing center. The protein resides in the centrosome. Its subcellular location is the cleavage furrow. The protein localises to the midbody. It localises to the golgi apparatus membrane. It is found in the golgi apparatus. The protein resides in the trans-Golgi network membrane. Downstream effector molecule for Rab11 GTPase which is involved in endocytic trafficking, cytokinesis and intracellular ciliogenesis by participating in membrane delivery. Recruited by Rab11 to endosomes where it links Rab11 to dynein motor complex. The functional Rab11-RAB11FIP3-dynein complex regulates the movement of peripheral sorting endosomes (SE) along microtubule tracks toward the microtubule organizing center/centrosome, generating the endocytic recycling compartment (ERC) during interphase of cell cycle. Facilitates the interaction between dynein and dynactin and activates dynein processivity. Binding with ASAP1 is needed to regulate the pericentrosomal localization of recycling endosomes. The Rab11-RAB11FIP3 complex is also implicated in the transport during telophase of vesicles derived from recycling endosomes to the cleavage furrow via centrosome-anchored microtubules, where the vesicles function to deliver membrane during late cytokinesis and abscission. The recruitment of Rab11-RAB11FIP3-containing endosomes to the cleavage furrow and tethering to the midbody is co-mediated by RAB11FIP3 interaction with ARF6-exocyst and RACGAP1-MKLP1 tethering complexes. Also involved in the Rab11-Rabin8-Rab8 ciliogenesis cascade by facilitating the orderly assembly of a ciliary targeting complex containing Rab11, ASAP1, Rabin8/RAB3IP, RAB11FIP3 and ARF4, which directs preciliary vesicle trafficking to mother centriole and ciliogenesis initiation. Also promotes the activity of Rab11 and ASAP1 in the ARF4-dependent Golgi-to-cilia transport of the sensory receptor rhodopsin. Competes with WDR44 for binding to Rab11, which controls intracellular ciliogenesis pathway. May play a role in breast cancer cell motility by regulating actin cytoskeleton. This chain is Rab11 family-interacting protein 3, found in Mus musculus (Mouse).